The sequence spans 274 residues: Large ribosomal subunit protein uL2 (274 aa).

Disordered regions lie at residues 28–53 (APYA…TVRH) and 223–274 (VAMN…RRNK). Low complexity predominate over residues 39 to 48 (KSGGRNNNGR).

It belongs to the universal ribosomal protein uL2 family. In terms of assembly, part of the 50S ribosomal subunit. Forms a bridge to the 30S subunit in the 70S ribosome.

In terms of biological role, one of the primary rRNA binding proteins. Required for association of the 30S and 50S subunits to form the 70S ribosome, for tRNA binding and peptide bond formation. It has been suggested to have peptidyltransferase activity; this is somewhat controversial. Makes several contacts with the 16S rRNA in the 70S ribosome. The sequence is that of Large ribosomal subunit protein uL2 from Pseudoalteromonas atlantica (strain T6c / ATCC BAA-1087).